The primary structure comprises 319 residues: Acetyl-coenzyme A carboxylase carboxyl transferase subunit alpha (319 aa).

The region spanning 35 to 296 (NIDEEVQRLR…KTQLLADLED (262 aa)) is the CoA carboxyltransferase C-terminal domain.

It belongs to the AccA family. Acetyl-CoA carboxylase is a heterohexamer composed of biotin carboxyl carrier protein (AccB), biotin carboxylase (AccC) and two subunits each of ACCase subunit alpha (AccA) and ACCase subunit beta (AccD).

It is found in the cytoplasm. The enzyme catalyses N(6)-carboxybiotinyl-L-lysyl-[protein] + acetyl-CoA = N(6)-biotinyl-L-lysyl-[protein] + malonyl-CoA. It functions in the pathway lipid metabolism; malonyl-CoA biosynthesis; malonyl-CoA from acetyl-CoA: step 1/1. Component of the acetyl coenzyme A carboxylase (ACC) complex. First, biotin carboxylase catalyzes the carboxylation of biotin on its carrier protein (BCCP) and then the CO(2) group is transferred by the carboxyltransferase to acetyl-CoA to form malonyl-CoA. This is Acetyl-coenzyme A carboxylase carboxyl transferase subunit alpha from Edwardsiella ictaluri (strain 93-146).